Here is a 330-residue protein sequence, read N- to C-terminus: Aspartate--ammonia ligase (330 aa).

It belongs to the class-II aminoacyl-tRNA synthetase family. AsnA subfamily.

It localises to the cytoplasm. It carries out the reaction L-aspartate + NH4(+) + ATP = L-asparagine + AMP + diphosphate + H(+). The protein operates within amino-acid biosynthesis; L-asparagine biosynthesis; L-asparagine from L-aspartate (ammonia route): step 1/1. The polypeptide is Aspartate--ammonia ligase (Glaesserella parasuis serovar 5 (strain SH0165) (Haemophilus parasuis)).